Here is a 66-residue protein sequence, read N- to C-terminus: Large ribosomal subunit protein bL35 (66 aa).

The span at 1–16 shows a compositional bias: basic residues; the sequence is MPKQKTHRASAKRFKR. The interval 1 to 22 is disordered; sequence MPKQKTHRASAKRFKRTGSGGL.

It belongs to the bacterial ribosomal protein bL35 family.

The protein is Large ribosomal subunit protein bL35 of Streptococcus suis (strain 05ZYH33).